Here is a 299-residue protein sequence, read N- to C-terminus: ATP synthase gamma chain (299 aa).

It belongs to the ATPase gamma chain family. F-type ATPases have 2 components, CF(1) - the catalytic core - and CF(0) - the membrane proton channel. CF(1) has five subunits: alpha(3), beta(3), gamma(1), delta(1), epsilon(1). CF(0) has three main subunits: a, b and c.

Its subcellular location is the cell membrane. Its function is as follows. Produces ATP from ADP in the presence of a proton gradient across the membrane. The gamma chain is believed to be important in regulating ATPase activity and the flow of protons through the CF(0) complex. The chain is ATP synthase gamma chain from Clavibacter michiganensis subsp. michiganensis (strain NCPPB 382).